We begin with the raw amino-acid sequence, 762 residues long: MYHPNMFESHHHMFDMTPKNSENDLGITGSHEEDFETKSGAEVTMENPLEEELQDPNQRPNKKKRYHRHTQRQIQELESFFKECPHPDDKQRKELSRELSLEPLQVKFWFQNKRTQMKAQHERHENQILKSENDKLRAENNRYKDALSNATCPNCGGPAAIGEMSFDEQHLRIENARLREEIDRISAIAAKYVGKPLMANSSSFPQLSSSHHIPSRSLDLEVGNFGNNNNSHTGFVGEMFGSSDILRSVSIPSEADKPMIVELAVAAMEELVRMAQTGDPLWVSSDNSVEILNEEEYFRTFPRGIGPKPIGLRSEASRESTVVIMNHINLIEILMDVNQWSSVFCGIVSRALTLEVLSTGVAGNYNGALQVMTAEFQVPSPLVPTRENYFVRYCKQHSDGIWAVVDVSLDSLRPSPITRSRRRPSGCLIQELQNGYSKVTWVEHIEVDDRSVHNMYKPLVNTGLAFGAKRWVATLDRQCERLASSMASNIPACDLSVITSPEGRKSMLKLAERMVMSFCTGVGASTAHAWTTLSTTGSDDVRVMTRKSMDDPGRPPGIVLSAATSFWIPVAPKRVFDFLRDENSRSEWDILSNGGLVQEMAHIANGRDPGNSVSLLRVNSGNSGQSNMLILQESCTDASGSYVIYAPVDIIAMNVVLSGGDPDYVALLPSGFAILPDGSARGGGGSANASAGAGVEGGGEGNNLEVVTTTGSCGGSLLTVAFQILVDSVPTAKLSLGSVATVNSLIKCTVERIKAALACDGA.

A disordered region spans residues 13 to 72; the sequence is MFDMTPKNSENDLGITGSHEEDFETKSGAEVTMENPLEEELQDPNQRPNKKKRYHRHTQR. The span at 30–39 shows a compositional bias: basic and acidic residues; the sequence is SHEEDFETKS. Over residues 60-71 the composition is skewed to basic residues; it reads PNKKKRYHRHTQ. Residues 62–121 constitute a DNA-binding region (homeobox); sequence KKKRYHRHTQRQIQELESFFKECPHPDDKQRKELSRELSLEPLQVKFWFQNKRTQMKAQH. A coiled-coil region spans residues 110–192; that stretch reads FQNKRTQMKA…DRISAIAAKY (83 aa). Residues 253-484 form the START domain; the sequence is SEADKPMIVE…LDRQCERLAS (232 aa).

It belongs to the HD-ZIP homeobox family. Class IV subfamily. In terms of assembly, interacts with GAI/RGA2, RGA/RGA1/GRS, RGL2/SCL19 and PDF2. Interacts with AIL7/PLT7, ANT, BBM and AIL1.

Its subcellular location is the nucleus. In terms of biological role, probable transcription factor involved in cell specification and pattern formation during embryogenesis. Binds to the L1 box DNA sequence 5'-TAAATG[CT]A-3'. Plays a role in maintaining the identity of L1 cells, possibly by interacting with their L1 box or other target-gene promoters; binds to the LIP1 gene promoter and stimulates its expression upon imbibition. Acts as a positive regulator of gibberellins (GAs)-regulated epidermal gene expression (e.g. LIP1, LIP2, LTP1, FDH and PDF1). Functionally redundant to PDF2. Seems to promote cell differentiation. This Arabidopsis thaliana (Mouse-ear cress) protein is Homeobox-leucine zipper protein MERISTEM L1.